Here is a 388-residue protein sequence, read N- to C-terminus: MRYLTAGESHGQALTAIIEGIPAGLALSAELINKELKRRQGGYGRGARMRIESDRVHISSGVRHGKTTGAPITLTIQNKDHQKWLDIMAVEAVEEQIKFKRKITRPRPGHADLVGGIKYRFDDLRNALERSSARETAMRVAVGAIAKAILTELGIETANHVLVFGGIEVAVPEAMSFADIKKVAESSDLSIVNPKQEATIKAHIDQVKKEGDTLGGIIETLIHGLPAGLGSYVQWDRKLDAKIAQAVLSINAFKGVEFGMGFDMGYQKGSQVMDDIIWHETSGYSRRTNRLGGFEAGMTTGQPIVVKGVMKPIPTLYKPLMSVDTETHEPYKATVERSDPTALPAAGVVMENVVATVITKEILEQFPSDNMTDLKQAFFAYRDYVHHF.

Arg-39 and Arg-45 together coordinate NADP(+). FMN-binding positions include Arg-130 to Ser-132, Asn-251 to Ala-252, Ala-296, Lys-311 to Thr-315, and Arg-337.

It belongs to the chorismate synthase family. Homotetramer. FMNH2 serves as cofactor.

The enzyme catalyses 5-O-(1-carboxyvinyl)-3-phosphoshikimate = chorismate + phosphate. It participates in metabolic intermediate biosynthesis; chorismate biosynthesis; chorismate from D-erythrose 4-phosphate and phosphoenolpyruvate: step 7/7. Its function is as follows. Catalyzes the anti-1,4-elimination of the C-3 phosphate and the C-6 proR hydrogen from 5-enolpyruvylshikimate-3-phosphate (EPSP) to yield chorismate, which is the branch point compound that serves as the starting substrate for the three terminal pathways of aromatic amino acid biosynthesis. This reaction introduces a second double bond into the aromatic ring system. The polypeptide is Chorismate synthase (Streptococcus equi subsp. equi (strain 4047)).